We begin with the raw amino-acid sequence, 538 residues long: Acetylcholine receptor subunit alpha-type acr-7 (538 aa).

A signal peptide spans 1-27; the sequence is MMVQSIQIVLPVALFFLIVFNGFTVEG. The Extracellular segment spans residues 28 to 250; that stretch reads SKKEAQLYRD…LHLRRRTFYY (223 aa). 2 N-linked (GlcNAc...) asparagine glycosylation sites follow: N41 and N101. 2 disulfide bridges follow: C160-C174 and C229-C230. 3 consecutive transmembrane segments (helical) span residues 251-271, 280-300, and 313-333; these read VFNVVLPTLLVSFMSLLAFCL, IGLQTTILLSVCFFLTILSEM, and VFFSALTFIVAMSTTFTILVL. Over 334–513 the chain is Cytoplasmic; it reads NIRYRQITNH…FAAQAVDRFC (180 aa). Residues 514–534 form a helical membrane-spanning segment; it reads LIIFTIVFIICCFIFVAIPPI.

It belongs to the ligand-gated ion channel (TC 1.A.9) family. Acetylcholine receptor (TC 1.A.9.1) subfamily. In terms of assembly, forms a homooligomeric channel blocked by alpha-bungarotoxin. The structure is probably pentameric.

Its subcellular location is the postsynaptic cell membrane. It localises to the cell membrane. Its function is as follows. After binding acetylcholine, the AChR responds by an extensive change in conformation that affects all subunits and leads to opening of an ion-conducting channel across the plasma membrane. This is Acetylcholine receptor subunit alpha-type acr-7 (acr-7) from Caenorhabditis elegans.